Here is a 105-residue protein sequence, read N- to C-terminus: Large ribosomal subunit protein uL24 (105 aa).

This sequence belongs to the universal ribosomal protein uL24 family. In terms of assembly, part of the 50S ribosomal subunit.

One of two assembly initiator proteins, it binds directly to the 5'-end of the 23S rRNA, where it nucleates assembly of the 50S subunit. Its function is as follows. One of the proteins that surrounds the polypeptide exit tunnel on the outside of the subunit. The chain is Large ribosomal subunit protein uL24 from Halorhodospira halophila (strain DSM 244 / SL1) (Ectothiorhodospira halophila (strain DSM 244 / SL1)).